The following is a 107-amino-acid chain: Phosphoribosyl-ATP pyrophosphatase (107 aa).

This sequence belongs to the PRA-PH family.

Its subcellular location is the cytoplasm. The catalysed reaction is 1-(5-phospho-beta-D-ribosyl)-ATP + H2O = 1-(5-phospho-beta-D-ribosyl)-5'-AMP + diphosphate + H(+). It functions in the pathway amino-acid biosynthesis; L-histidine biosynthesis; L-histidine from 5-phospho-alpha-D-ribose 1-diphosphate: step 2/9. This Brucella abortus (strain S19) protein is Phosphoribosyl-ATP pyrophosphatase.